Consider the following 2164-residue polypeptide: Hemagglutinin A (2164 aa).

Residues 1–25 (MRKLNSLFSLAVLLSLLCWGQTAAA) form the signal peptide. Peptidase C25-like stretches follow at residues 26 to 539 (QGGP…TPPP), 540 to 991 (GGSS…TPPP), and 992 to 1443 (GGTS…TPPP). Disordered stretches follow at residues 493–512 (WDAP…LSES) and 520–541 (SWKT…PPGG). The span at 496 to 508 (PNGTPNPNPGTTT) shows a compositional bias: low complexity.

The protein belongs to the peptidase C25 family.

Functionally, agglutinates erythrocytes. The polypeptide is Hemagglutinin A (hagA) (Porphyromonas gingivalis (strain ATCC BAA-308 / W83)).